A 418-amino-acid polypeptide reads, in one-letter code: Cyclin-dependent kinase 15 (418 aa).

The Protein kinase domain maps to 84–369 (YLNLEKLGEG…AQDALLHPYF (286 aa)). Residues 90–98 (LGEGTYATV) and Lys-113 contribute to the ATP site. Catalysis depends on Asp-205, which acts as the Proton acceptor.

The protein belongs to the protein kinase superfamily. CMGC Ser/Thr protein kinase family. CDC2/CDKX subfamily. The cofactor is Mg(2+).

It carries out the reaction L-seryl-[protein] + ATP = O-phospho-L-seryl-[protein] + ADP + H(+). The catalysed reaction is L-threonyl-[protein] + ATP = O-phospho-L-threonyl-[protein] + ADP + H(+). In terms of biological role, serine/threonine-protein kinase involved in the control of the eukaryotic cell cycle, whose activity is controlled by an associated cyclin. The protein is Cyclin-dependent kinase 15 (cdk15) of Danio rerio (Zebrafish).